Here is a 124-residue protein sequence, read N- to C-terminus: Max-like protein 1 (124 aa).

The span at 1–10 shows a compositional bias: acidic residues; that stretch reads MSDMSDLEDD. The segment at 1–44 is disordered; the sequence is MSDMSDLEDDQTGHCGSGEHSGPFDPKRHAREQHNALERRRRDN. Residues 29–42 form a basic motif region; that stretch reads HAREQHNALERRRR. The bHLH domain occupies 29–82; it reads HAREQHNALERRRRDNIKDMYTSLREVVPDANGERVQASRAVILKKAIESIEKG. Residues 32–44 show a composition bias toward basic and acidic residues; that stretch reads EQHNALERRRRDN. The interval 43-82 is helix-loop-helix motif; the sequence is DNIKDMYTSLREVVPDANGERVQASRAVILKKAIESIEKG. The stretch at 86-113 forms a coiled coil; that stretch reads SATLSVDVAEQESKNAKLREEIARLKAK.

It belongs to the MAX family. As to quaternary structure, heterodimer with mdl-1 in presence and absence of DNA. Interacts with tdpt-1; the interaction promotes axon regeneration after injury. As to expression, expressed in D-type motor neurons.

The protein localises to the nucleus. Its function is as follows. Transcriptional regulator which binds to the E box motif 5'-CACGTG-3', when in a heterodimeric complex with mdl-1. Involved in the control of lifespan in response to dietary restriction, the decline in protein homeostasis associated with normal aging and may overlap with the insulin-like signaling pathway. Involved in promoting infection by the microsporidian pathogen N.parisii. Required for the expression of svh-2 and the promotion of axon regeneration after injury. This chain is Max-like protein 1, found in Caenorhabditis elegans.